An 87-amino-acid polypeptide reads, in one-letter code: DNA-directed RNA polymerase subunit omega (87 aa).

It belongs to the RNA polymerase subunit omega family. The RNAP catalytic core consists of 2 alpha, 1 beta, 1 beta' and 1 omega subunit. When a sigma factor is associated with the core the holoenzyme is formed, which can initiate transcription.

It catalyses the reaction RNA(n) + a ribonucleoside 5'-triphosphate = RNA(n+1) + diphosphate. In terms of biological role, promotes RNA polymerase assembly. Latches the N- and C-terminal regions of the beta' subunit thereby facilitating its interaction with the beta and alpha subunits. This is DNA-directed RNA polymerase subunit omega from Thioalkalivibrio sulfidiphilus (strain HL-EbGR7).